The primary structure comprises 438 residues: Aspartate--tRNA(Asp/Asn) ligase (438 aa).

E176 is an L-aspartate binding site. The tract at residues 198 to 201 is aspartate; the sequence is QLYK. R220 serves as a coordination point for L-aspartate. Residues 220 to 222, 228 to 230, and E361 each bind ATP; these read RAE and RHL. Residues E361 and S364 each coordinate Mg(2+). Residues S364 and R368 each contribute to the L-aspartate site. 409-412 contacts ATP; that stretch reads GADR.

This sequence belongs to the class-II aminoacyl-tRNA synthetase family. Type 2 subfamily. As to quaternary structure, homodimer. Mg(2+) serves as cofactor.

Its subcellular location is the cytoplasm. The catalysed reaction is tRNA(Asx) + L-aspartate + ATP = L-aspartyl-tRNA(Asx) + AMP + diphosphate. In terms of biological role, aspartyl-tRNA synthetase with relaxed tRNA specificity since it is able to aspartylate not only its cognate tRNA(Asp) but also tRNA(Asn). Reaction proceeds in two steps: L-aspartate is first activated by ATP to form Asp-AMP and then transferred to the acceptor end of tRNA(Asp/Asn). This chain is Aspartate--tRNA(Asp/Asn) ligase, found in Methanococcus maripaludis (strain DSM 14266 / JCM 13030 / NBRC 101832 / S2 / LL).